Reading from the N-terminus, the 862-residue chain is Phosphatidic acid phosphohydrolase 1 (862 aa).

The interval 19 to 104 (NPATLSGAID…VPDELLVSPV (86 aa)) is N-LIP. Disordered stretches follow at residues 104-183 (VMSA…SVEE) and 300-341 (GSTL…AGSG). Over residues 105–117 (MSATSSPPQSPET) the composition is skewed to polar residues. S110 and S114 each carry phosphoserine. The span at 132–143 (NENKKKEKKVLE) shows a compositional bias: basic and acidic residues. Low complexity-rich tracts occupy residues 161–179 (SETT…TPPD) and 300–313 (GSTL…PSGS). S168 is subject to Phosphoserine. Positions 398–402 (DIDGT) match the DXDXT motif motif. At K496 the chain carries N6-acetyllysine. Position 511 is a phosphoserine (S511). At S602 the chain carries Phosphoserine; by CDC28. Residues 648–732 (SDISNDDSDN…TPNKSTMSKG (85 aa)) are disordered. The segment covering 651–663 (SNDDSDNIDEDTD) has biased composition (acidic residues). 2 stretches are compositionally biased toward polar residues: residues 664–679 (VSQQ…NSVK) and 687–699 (PQRN…NNNE). Low complexity predominate over residues 710-730 (ASDLVSSHSSSGSTPNKSTMS). The residue at position 723 (T723) is a Phosphothreonine; by CDC28. Residue S744 is modified to Phosphoserine; by CDC28. A phosphoserine mark is found at S748, S773, and S774. Residues 757–780 (MDDEDSNYNRTKSRRASSAAATSI) are disordered. K801 bears the N6-acetyllysine mark. The disordered stretch occupies residues 807–862 (DVHSLGNSDTESRREQSVNETGRNQLPHNSMDDKDLDSRVSDEFDDDEFDEDEFED). 2 positions are modified to phosphoserine: S810 and S814. T816 carries the post-translational modification Phosphothreonine. Positions 824-834 (VNETGRNQLPH) are enriched in polar residues. A compositionally biased stretch (basic and acidic residues) spans 836–848 (SMDDKDLDSRVSD). Phosphoserine occurs at positions 844 and 847. The segment covering 849–862 (EFDDDEFDEDEFED) has biased composition (acidic residues).

This sequence belongs to the lipin family. Requires Mg(2+) as cofactor. Post-translationally, acetylation at Lys-496 and Lys-801 by ESA1 promotes synthesis of diacylglycerol. In terms of processing, phosphorylated by CDC28 at the onset of mitosis, and dephosphorylated by the NEM1-SPO7 complex. Phosphorylation regulates recruitment on promoters of lipid biosynthetic enzymes.

The protein localises to the cytoplasm. It is found in the nucleus membrane. It localises to the endoplasmic reticulum membrane. It catalyses the reaction a 1,2-diacyl-sn-glycero-3-phosphate + H2O = a 1,2-diacyl-sn-glycerol + phosphate. With respect to regulation, phenylglyoxal and propranolol inhibit activity in dose-dependent manners with IC(50) values of 1.3 mM and 0.2 mM, respectively. Sertraline inhibits activity in a dose-dependent manner with an IC(50) value of 85 uM; the inhibitory effects of sertraline and propranolol are additive. Functionally, mg(2+)-dependent phosphatidate (PA) phosphatase which catalyzes the dephosphorylation of PA to yield diacylglycerol. Required for de novo lipid synthesis and formation of lipid droplets. Controls transcription of phospholipid biosynthetic genes and nuclear structure by regulating the amount of membrane present at the nuclear envelope. Involved in plasmid maintenance, in respiration and in cell proliferation. This Saccharomyces cerevisiae (strain ATCC 204508 / S288c) (Baker's yeast) protein is Phosphatidic acid phosphohydrolase 1 (PAH1).